The following is a 152-amino-acid chain: Superoxide dismutase [Cu-Zn] (152 aa).

His-45, His-47, and His-62 together coordinate Cu cation. Cys-56 and Cys-145 form a disulfide bridge. Residues His-62, His-70, His-79, and Asp-82 each coordinate Zn(2+). His-119 lines the Cu cation pocket.

Belongs to the Cu-Zn superoxide dismutase family. In terms of assembly, homodimer. It depends on Cu cation as a cofactor. Zn(2+) is required as a cofactor.

Its subcellular location is the cytoplasm. It catalyses the reaction 2 superoxide + 2 H(+) = H2O2 + O2. Functionally, destroys radicals which are normally produced within the cells and which are toxic to biological systems. The polypeptide is Superoxide dismutase [Cu-Zn] (SODCC) (Brassica oleracea var. capitata (Cabbage)).